A 217-amino-acid polypeptide reads, in one-letter code: Thiamine-phosphate synthase (217 aa).

Residues 45–49 (QFRQK) and Asn-81 contribute to the 4-amino-2-methyl-5-(diphosphooxymethyl)pyrimidine site. Asp-82 and Asp-101 together coordinate Mg(2+). 4-amino-2-methyl-5-(diphosphooxymethyl)pyrimidine is bound at residue Ser-120. 147–149 (TPS) lines the 2-[(2R,5Z)-2-carboxy-4-methylthiazol-5(2H)-ylidene]ethyl phosphate pocket. A 4-amino-2-methyl-5-(diphosphooxymethyl)pyrimidine-binding site is contributed by Lys-150. 2-[(2R,5Z)-2-carboxy-4-methylthiazol-5(2H)-ylidene]ethyl phosphate is bound by residues Gly-179 and 197-198 (IS).

Belongs to the thiamine-phosphate synthase family. Requires Mg(2+) as cofactor.

It carries out the reaction 2-[(2R,5Z)-2-carboxy-4-methylthiazol-5(2H)-ylidene]ethyl phosphate + 4-amino-2-methyl-5-(diphosphooxymethyl)pyrimidine + 2 H(+) = thiamine phosphate + CO2 + diphosphate. The catalysed reaction is 2-(2-carboxy-4-methylthiazol-5-yl)ethyl phosphate + 4-amino-2-methyl-5-(diphosphooxymethyl)pyrimidine + 2 H(+) = thiamine phosphate + CO2 + diphosphate. The enzyme catalyses 4-methyl-5-(2-phosphooxyethyl)-thiazole + 4-amino-2-methyl-5-(diphosphooxymethyl)pyrimidine + H(+) = thiamine phosphate + diphosphate. The protein operates within cofactor biosynthesis; thiamine diphosphate biosynthesis; thiamine phosphate from 4-amino-2-methyl-5-diphosphomethylpyrimidine and 4-methyl-5-(2-phosphoethyl)-thiazole: step 1/1. Condenses 4-methyl-5-(beta-hydroxyethyl)thiazole monophosphate (THZ-P) and 2-methyl-4-amino-5-hydroxymethyl pyrimidine pyrophosphate (HMP-PP) to form thiamine monophosphate (TMP). The chain is Thiamine-phosphate synthase from Helicobacter pylori (strain J99 / ATCC 700824) (Campylobacter pylori J99).